A 171-amino-acid chain; its full sequence is uncharacterized protein (171 aa).

2 disordered regions span residues 68–124 and 140–171; these read NKNN…ASQQ and GDED…SIKN. Residues 141-160 are compositionally biased toward basic and acidic residues; sequence DEDKGMDSTLKLPERTKRDS.

Belongs to the asfivirus H171R family.

The protein resides in the virion. This is an uncharacterized protein from Ornithodoros (relapsing fever ticks).